The following is a 55-amino-acid chain: Large ribosomal subunit protein bL33 (55 aa).

The protein belongs to the bacterial ribosomal protein bL33 family.

The protein is Large ribosomal subunit protein bL33 of Paramagnetospirillum magneticum (strain ATCC 700264 / AMB-1) (Magnetospirillum magneticum).